A 31-amino-acid polypeptide reads, in one-letter code: Cyclotide mra3 (31 aa).

3 disulfides stabilise this stretch: cysteine 5–cysteine 21, cysteine 9–cysteine 23, and cysteine 14–cysteine 28.

This is a cyclic peptide. In terms of processing, contains 3 disulfide bonds.

In terms of biological role, probably participates in a plant defense mechanism. This chain is Cyclotide mra3, found in Melicytus ramiflorus (Whitey wood).